The primary structure comprises 206 residues: Small ribosomal subunit protein uS4 (206 aa).

One can recognise an S4 RNA-binding domain in the interval 96-156; it reads CRLDNVVYRM…EKAKNQLRIV (61 aa).

It belongs to the universal ribosomal protein uS4 family. Part of the 30S ribosomal subunit. Contacts protein S5. The interaction surface between S4 and S5 is involved in control of translational fidelity.

In terms of biological role, one of the primary rRNA binding proteins, it binds directly to 16S rRNA where it nucleates assembly of the body of the 30S subunit. Functionally, with S5 and S12 plays an important role in translational accuracy. The protein is Small ribosomal subunit protein uS4 of Pseudomonas savastanoi pv. phaseolicola (strain 1448A / Race 6) (Pseudomonas syringae pv. phaseolicola (strain 1448A / Race 6)).